The sequence spans 343 residues: N-acetyl-gamma-glutamyl-phosphate reductase (343 aa).

The active site involves Cys150.

It belongs to the NAGSA dehydrogenase family. Type 1 subfamily.

The protein resides in the cytoplasm. The catalysed reaction is N-acetyl-L-glutamate 5-semialdehyde + phosphate + NADP(+) = N-acetyl-L-glutamyl 5-phosphate + NADPH + H(+). Its pathway is amino-acid biosynthesis; L-arginine biosynthesis; N(2)-acetyl-L-ornithine from L-glutamate: step 3/4. Its function is as follows. Catalyzes the NADPH-dependent reduction of N-acetyl-5-glutamyl phosphate to yield N-acetyl-L-glutamate 5-semialdehyde. This is N-acetyl-gamma-glutamyl-phosphate reductase from Nitrosococcus oceani (strain ATCC 19707 / BCRC 17464 / JCM 30415 / NCIMB 11848 / C-107).